We begin with the raw amino-acid sequence, 84 residues long: Putative membrane protein insertion efficiency factor (84 aa).

Belongs to the UPF0161 family.

The protein resides in the cell inner membrane. In terms of biological role, could be involved in insertion of integral membrane proteins into the membrane. This Shewanella loihica (strain ATCC BAA-1088 / PV-4) protein is Putative membrane protein insertion efficiency factor.